A 215-amino-acid chain; its full sequence is MKFFIDTANINEIKEANALGVLAGVTTNPSLVAKEGVDFHERIREICNVVEGPVSAEVISLEADKMIEEGKELAKIAPNVVVKVPMTTEGLKAVKAFSDLGIRTNVTLVFSAVQALLAARAGATYVSPFLGRLDDIGHNGMDLIRQIAEIFAIHGIETEIIAASVRHSVHVTDAALNGAHIATIPANVIASLVKHPLTDQGIEKFLADWEKTQEK.

The active-site Schiff-base intermediate with substrate is K83.

The protein belongs to the transaldolase family. Type 3B subfamily.

Its subcellular location is the cytoplasm. It catalyses the reaction D-sedoheptulose 7-phosphate + D-glyceraldehyde 3-phosphate = D-erythrose 4-phosphate + beta-D-fructose 6-phosphate. It participates in carbohydrate degradation; pentose phosphate pathway; D-glyceraldehyde 3-phosphate and beta-D-fructose 6-phosphate from D-ribose 5-phosphate and D-xylulose 5-phosphate (non-oxidative stage): step 2/3. In terms of biological role, transaldolase is important for the balance of metabolites in the pentose-phosphate pathway. This chain is Probable transaldolase 1, found in Bacillus anthracis.